Consider the following 423-residue polypeptide: Adenylosuccinate synthetase (423 aa).

Asp-12 (proton acceptor) is an active-site residue. 2 residues coordinate Mg(2+): Asp-12 and Gly-39. Residues 37–40, Thr-129, Arg-143, Asn-221, Thr-236, and Arg-300 contribute to the IMP site; that span reads NAGH. Residue 39–41 coordinates GTP; it reads GHS. Catalysis depends on His-40, which acts as the Proton donor. Substrate is bound at residue 296 to 302; sequence VSTGRKR. GTP is bound by residues Arg-302, 328–330, and 412–414; these read KLD and GTG.

This sequence belongs to the adenylosuccinate synthetase family. As to quaternary structure, homodimer. Mg(2+) serves as cofactor.

Its subcellular location is the cytoplasm. The enzyme catalyses IMP + L-aspartate + GTP = N(6)-(1,2-dicarboxyethyl)-AMP + GDP + phosphate + 2 H(+). Its pathway is purine metabolism; AMP biosynthesis via de novo pathway; AMP from IMP: step 1/2. Functionally, plays an important role in the de novo pathway and in the salvage pathway of purine nucleotide biosynthesis. Catalyzes the first committed step in the biosynthesis of AMP from IMP. This is Adenylosuccinate synthetase from Pyricularia oryzae (strain 70-15 / ATCC MYA-4617 / FGSC 8958) (Rice blast fungus).